A 609-amino-acid chain; its full sequence is Dihydroxy-acid dehydratase (609 aa).

D81 is a Mg(2+) binding site. C122 is a [2Fe-2S] cluster binding site. 2 residues coordinate Mg(2+): D123 and K124. An N6-carboxylysine modification is found at K124. C195 serves as a coordination point for [2Fe-2S] cluster. Residue E491 coordinates Mg(2+). The Proton acceptor role is filled by S517.

This sequence belongs to the IlvD/Edd family. In terms of assembly, homodimer. It depends on [2Fe-2S] cluster as a cofactor. Mg(2+) is required as a cofactor.

It catalyses the reaction (2R)-2,3-dihydroxy-3-methylbutanoate = 3-methyl-2-oxobutanoate + H2O. It carries out the reaction (2R,3R)-2,3-dihydroxy-3-methylpentanoate = (S)-3-methyl-2-oxopentanoate + H2O. The protein operates within amino-acid biosynthesis; L-isoleucine biosynthesis; L-isoleucine from 2-oxobutanoate: step 3/4. Its pathway is amino-acid biosynthesis; L-valine biosynthesis; L-valine from pyruvate: step 3/4. Its function is as follows. Functions in the biosynthesis of branched-chain amino acids. Catalyzes the dehydration of (2R,3R)-2,3-dihydroxy-3-methylpentanoate (2,3-dihydroxy-3-methylvalerate) into 2-oxo-3-methylpentanoate (2-oxo-3-methylvalerate) and of (2R)-2,3-dihydroxy-3-methylbutanoate (2,3-dihydroxyisovalerate) into 2-oxo-3-methylbutanoate (2-oxoisovalerate), the penultimate precursor to L-isoleucine and L-valine, respectively. The protein is Dihydroxy-acid dehydratase of Acinetobacter baumannii (strain ATCC 17978 / DSM 105126 / CIP 53.77 / LMG 1025 / NCDC KC755 / 5377).